A 92-amino-acid polypeptide reads, in one-letter code: Small ribosomal subunit protein uS19c (92 aa).

Belongs to the universal ribosomal protein uS19 family.

The protein localises to the plastid. Its subcellular location is the chloroplast. Functionally, protein S19 forms a complex with S13 that binds strongly to the 16S ribosomal RNA. The polypeptide is Small ribosomal subunit protein uS19c (Adiantum capillus-veneris (Maidenhair fern)).